A 174-amino-acid chain; its full sequence is MAPANLGLTPHWVMLLGAVLLLLLSGASAQEPPRVGCSEYTNRSCEECLRNVSCLWCNENKACMDYPVRKILPPASLCKLSSARWGVCWVNFEALIITMSVLGGSVLLGITVCCCYCCRRKKSRKPDKSDERAMREQEERRVRQEERRAEMKSRHDEIRKKYGLFKEQNPYEKF.

Residues 1 to 29 form the signal peptide; that stretch reads MAPANLGLTPHWVMLLGAVLLLLLSGASA. Residues 30–93 are Extracellular-facing; sequence QEPPRVGCSE…RWGVCWVNFE (64 aa). One can recognise a PSI domain in the interval 36–89; sequence GCSEYTNRSCEECLRNVSCLWCNENKACMDYPVRKILPPASLCKLSSARWGVCW. Residues asparagine 42 and asparagine 51 are each glycosylated (N-linked (GlcNAc...) asparagine). The helical transmembrane segment at 94-114 threads the bilayer; the sequence is ALIITMSVLGGSVLLGITVCC. At 115–174 the chain is on the cytoplasmic side; sequence CYCCRRKKSRKPDKSDERAMREQEERRVRQEERRAEMKSRHDEIRKKYGLFKEQNPYEKF. A disordered region spans residues 125-155; the sequence is KPDKSDERAMREQEERRVRQEERRAEMKSRH. A compositionally biased stretch (basic and acidic residues) spans 126-155; that stretch reads PDKSDERAMREQEERRVRQEERRAEMKSRH. The stretch at 127–163 forms a coiled coil; the sequence is DKSDERAMREQEERRVRQEERRAEMKSRHDEIRKKYG. Phosphotyrosine is present on tyrosine 171.

In terms of assembly, interacts with PTTG1.

It localises to the cell membrane. The protein resides in the cytoplasm. The protein localises to the nucleus. In terms of biological role, may facilitate PTTG1 nuclear translocation. The protein is Pituitary tumor-transforming gene 1 protein-interacting protein (Pttg1ip) of Mus musculus (Mouse).